The following is a 433-amino-acid chain: Sensor protein RstB (433 aa).

At 1–3 the chain is on the cytoplasmic side; that stretch reads MKK. The helical transmembrane segment at 4-24 threads the bilayer; that stretch reads LFIQFYLLLFVCFLVMSLLVG. The Periplasmic portion of the chain corresponds to 25-135; the sequence is LVYKFTAERA…PYLYYLHQMR (111 aa). Residues 136 to 156 traverse the membrane as a helical segment; it reads LLDIALIAFIAISLAFPVFIW. The Cytoplasmic portion of the chain corresponds to 157–433; that stretch reads MRPHWQDMLK…WHNIPQFTSA (277 aa). One can recognise an HAMP domain in the interval 158–210; sequence RPHWQDMLKLEAAAQRFGDGHLNERIHFDEGSSFERLGVAFNQMADNINALIA. The 208-residue stretch at 218-425 folds into the Histidine kinase domain; that stretch reads GIAHELRTPL…RFSFSWPLWH (208 aa). His-276 bears the Phosphohistidine; by autocatalysis mark.

Autophosphorylated.

The protein resides in the cell inner membrane. It carries out the reaction ATP + protein L-histidine = ADP + protein N-phospho-L-histidine.. Member of the two-component regulatory system RstB/RstA. RstB functions as a membrane-associated protein kinase that phosphorylates RstA. The protein is Sensor protein RstB (rstB) of Escherichia coli (strain K12).